The sequence spans 216 residues: Heart- and neural crest derivatives-expressed protein 1 (216 aa).

Disordered regions lie at residues 1–20 (MNLV…HPPH), 53–109 (APDF…RTES), and 165–203 (ELKK…KGRT). Basic residues predominate over residues 8-18 (AHHHHHHHSHP). Residues 65-78 (TAVAAAAYGPDARP) are compositionally biased toward low complexity. Positions 92-104 (LPKRKGSGPKKER) are enriched in basic residues. Positions 94 to 146 (KRKGSGPKKERRRTESINSAFAELRECIPNVPADTKLSKIKTLRLATSYIAYL) constitute a bHLH domain. T107 is subject to Phosphothreonine; by PLK4. A Phosphoserine; by PLK4 modification is found at S109. A compositionally biased stretch (basic and acidic residues) spans 165–174 (ELKKTDGGRE).

In terms of assembly, efficient DNA binding requires dimerization with another bHLH protein. Forms homodimers and heterodimers with TCF3 gene products E12 and E47, HAND2 and HEY1, HEY2 and HEYL (hairy-related transcription factors). Interacts with MDFIC. Interacts with SOX15; the interaction enhances HAND1-induced differentiation of trophoblast giant cells. In terms of processing, phosphorylation by PLK4 disrupts the interaction with MDFIC and leads to translocation into the nucleoplasm, allowing dimerization and transcription factor activity. Smooth muscle cells of the gut and adrenal tissue.

It is found in the nucleus. It localises to the nucleoplasm. The protein resides in the nucleolus. Transcription factor that plays an essential role in both trophoblast giant cell differentiation and in cardiac morphogenesis. Binds the DNA sequence 5'-NRTCTG-3' (non-canonical E-box). Acts as a transcriptional repressor of SOX15. In the adult, could be required for ongoing expression of cardiac-specific genes. This chain is Heart- and neural crest derivatives-expressed protein 1 (Hand1), found in Mus musculus (Mouse).